The sequence spans 402 residues: MAT+ sexual cell fertilization-promoting factor (402 aa).

The segment at residues 169 to 237 (IPRPPNAYIL…KLMSAHPHYR (69 aa)) is a DNA-binding region (HMG box). The tract at residues 246 to 272 (IRRRAPRRNRAQEVANASPIGENSGAP) is disordered.

It is found in the nucleus. Controls fertilization, probably by determining the mating type. This Podospora anserina (Pleurage anserina) protein is MAT+ sexual cell fertilization-promoting factor (FPR1).